The primary structure comprises 509 residues: Erythropoietin receptor (509 aa).

The N-terminal stretch at 1–24 is a signal peptide; the sequence is MYHFGATLWPGVGSLCLLLAGATW. The Extracellular segment spans residues 25-251; that stretch reads APSPNSPDAK…SLLTASDLDP (227 aa). Cystine bridges form between Cys-52-Cys-62 and Cys-91-Cys-107. The region spanning 148-248 is the Fibronectin type-III domain; that stretch reads PPAGLLARRA…EPASLLTASD (101 aa). Asn-184 carries an N-linked (GlcNAc...) asparagine glycan. Positions 234–238 match the WSXWS motif motif; the sequence is WSAWS. Residues 252 to 274 traverse the membrane as a helical segment; sequence LILTLSLILVLILLLLAVLALLS. At 275–509 the chain is on the cytoplasmic side; the sequence is HRRTLKQKIW…PSPPNYVTCS (235 aa). Lys-282 participates in a covalent cross-link: Glycyl lysine isopeptide (Lys-Gly) (interchain with G-Cter in ubiquitin). The Box 1 motif motif lies at 283–291; that stretch reads IWPGIPSPE. Residues Tyr-369 and Tyr-427 each carry the phosphotyrosine; by JAK2 modification. The ITIM motif motif lies at 453–458; sequence LKYLYL. A Glycyl lysine isopeptide (Lys-Gly) (interchain with G-Cter in ubiquitin) cross-link involves residue Lys-454. Phosphotyrosine; by JAK2 occurs at positions 455, 457, 469, 486, 490, and 505. Residues 467–509 are disordered; the sequence is TDYSSGGSQETQGGSSSGPYSNPYENSLVPAPEPSPPNYVTCS. Residues 470 to 493 show a composition bias toward low complexity; the sequence is SSGGSQETQGGSSSGPYSNPYENS.

Belongs to the type I cytokine receptor family. Type 1 subfamily. As to quaternary structure, forms homodimers on EPO stimulation. The tyrosine-phosphorylated form interacts with several SH2 domain-containing proteins including LYN, the adapter protein SH2B2, PTPN6, PTPN11, JAK2, PI3 kinases, STAT5A/B, SOCS3, CRKL. Interacts with INPP5D/SHIP1. SH2B2 binding inhibits the JAK-STAT signaling. Interacts with RHEX; this interaction occurs in a erythropoietin (EPO)-dependent manner. Interacts with ATXN2L. On EPO stimulation, phosphorylated on C-terminal tyrosine residues by JAK2. The phosphotyrosine motifs are also recruitment sites for several SH2-containing proteins and adapter proteins which mediate cell proliferation. Phosphorylation on Tyr-455 is required for PTPN6 interaction, Tyr-427 for PTPN11. Tyr-427 is also required for SOCS3 binding, but Tyr-455/Tyr-457 motif is the preferred binding site. In terms of processing, ubiquitinated by the ECS(SOCS2) complex following ligand-binding and phosphorylation by JAK2, leading to its degradation by the proteasome. Regulation by the ECS(SOCS2) complex acts as a negative feedback loop of erythropoietin-mediated signaling pathway. Ubiquitination at Lys-282 mediates receptor internalization, whereas ubiquitination at Lys-454 promotes trafficking of activated receptors to the lysosomes for degradation. Ubiquitinated by NOSIP; appears to be either multi-monoubiquitinated or polyubiquitinated. Ubiquitination mediates proliferation and survival of EPO-dependent cells.

Its subcellular location is the cell membrane. Functionally, receptor for erythropoietin, which mediates erythropoietin-induced erythroblast proliferation and differentiation. Upon EPO stimulation, EPOR dimerizes triggering the JAK2/STAT5 signaling cascade. In some cell types, can also activate STAT1 and STAT3. May also activate the LYN tyrosine kinase. Isoform EPOR-T acts as a dominant-negative receptor of EPOR-mediated signaling. The sequence is that of Erythropoietin receptor (EPOR) from Sus scrofa (Pig).